Consider the following 64-residue polypeptide: MAEDKFEQAKGNLKETVGNVTDNKDLEKEGQNDKASGKAKEAVENVKNKANDLIDKVKGNNDNK.

The segment at 1 to 64 is disordered; the sequence is MAEDKFEQAK…DKVKGNNDNK (64 aa). Residues 22-64 show a composition bias toward basic and acidic residues; the sequence is DNKDLEKEGQNDKASGKAKEAVENVKNKANDLIDKVKGNNDNK.

The protein belongs to the UPF0337 (CsbD) family.

The polypeptide is UPF0337 protein SH2043 (Staphylococcus haemolyticus (strain JCSC1435)).